We begin with the raw amino-acid sequence, 156 residues long: Endoribonuclease YbeY (156 aa).

The Zn(2+) site is built by His-122, His-126, and His-132.

This sequence belongs to the endoribonuclease YbeY family. It depends on Zn(2+) as a cofactor.

It localises to the cytoplasm. Functionally, single strand-specific metallo-endoribonuclease involved in late-stage 70S ribosome quality control and in maturation of the 3' terminus of the 16S rRNA. The chain is Endoribonuclease YbeY from Bacillus cereus (strain B4264).